The following is a 283-amino-acid chain: Pantothenate synthetase (283 aa).

Residue 30-37 coordinates ATP; sequence MGYFHDGH. H37 functions as the Proton donor in the catalytic mechanism. Residue Q61 coordinates (R)-pantoate. Residue Q61 participates in beta-alanine binding. 147 to 150 serves as a coordination point for ATP; the sequence is GSKD. Residue Q153 participates in (R)-pantoate binding. Residues V176 and 184-187 each bind ATP; that span reads MSSR.

Belongs to the pantothenate synthetase family. In terms of assembly, homodimer.

It is found in the cytoplasm. It catalyses the reaction (R)-pantoate + beta-alanine + ATP = (R)-pantothenate + AMP + diphosphate + H(+). It functions in the pathway cofactor biosynthesis; (R)-pantothenate biosynthesis; (R)-pantothenate from (R)-pantoate and beta-alanine: step 1/1. Its function is as follows. Catalyzes the condensation of pantoate with beta-alanine in an ATP-dependent reaction via a pantoyl-adenylate intermediate. The sequence is that of Pantothenate synthetase from Desulforapulum autotrophicum (strain ATCC 43914 / DSM 3382 / VKM B-1955 / HRM2) (Desulfobacterium autotrophicum).